The primary structure comprises 233 residues: Biosynthetic peptidoglycan transglycosylase (233 aa).

A helical membrane pass occupies residues 4–24 (LAYLAGCLIVGVVAMQVYFFL).

Belongs to the glycosyltransferase 51 family.

The protein resides in the cell inner membrane. The catalysed reaction is [GlcNAc-(1-&gt;4)-Mur2Ac(oyl-L-Ala-gamma-D-Glu-L-Lys-D-Ala-D-Ala)](n)-di-trans,octa-cis-undecaprenyl diphosphate + beta-D-GlcNAc-(1-&gt;4)-Mur2Ac(oyl-L-Ala-gamma-D-Glu-L-Lys-D-Ala-D-Ala)-di-trans,octa-cis-undecaprenyl diphosphate = [GlcNAc-(1-&gt;4)-Mur2Ac(oyl-L-Ala-gamma-D-Glu-L-Lys-D-Ala-D-Ala)](n+1)-di-trans,octa-cis-undecaprenyl diphosphate + di-trans,octa-cis-undecaprenyl diphosphate + H(+). Its pathway is cell wall biogenesis; peptidoglycan biosynthesis. Functionally, peptidoglycan polymerase that catalyzes glycan chain elongation from lipid-linked precursors. The sequence is that of Biosynthetic peptidoglycan transglycosylase from Cupriavidus metallidurans (strain ATCC 43123 / DSM 2839 / NBRC 102507 / CH34) (Ralstonia metallidurans).